Reading from the N-terminus, the 334-residue chain is Heme A synthase (334 aa).

5 helical membrane passes run 6 to 26 (ITRWLFISCIMVILMIIIGGI), 93 to 113 (GRITTLIYIVPLICFYFQGVI), 119 to 139 (LPYIIALLLFCIQGFMGWYMV), 154 to 174 (LAFHLIIAVIIYHILFYQLIK), and 189 to 209 (LIFSCISITVIYIQIFLGALV). A heme-binding site is contributed by H253. 3 helical membrane passes run 255–275 (LGGFSVFAVNAILVICLFKVK), 282–302 (IAYFLIIVLLIQIATGIITIV), and 305–325 (VPIIIASIHQFVAIILLSIII). Position 313 (H313) interacts with heme.

It belongs to the COX15/CtaA family. Type 2 subfamily. In terms of assembly, interacts with CtaB. Heme b is required as a cofactor.

The protein resides in the cell membrane. It carries out the reaction Fe(II)-heme o + 2 A + H2O = Fe(II)-heme a + 2 AH2. It functions in the pathway porphyrin-containing compound metabolism; heme A biosynthesis; heme A from heme O: step 1/1. Catalyzes the conversion of heme O to heme A by two successive hydroxylations of the methyl group at C8. The first hydroxylation forms heme I, the second hydroxylation results in an unstable dihydroxymethyl group, which spontaneously dehydrates, resulting in the formyl group of heme A. This is Heme A synthase from Rickettsia prowazekii (strain Madrid E).